The primary structure comprises 127 residues: SH2 domain-containing protein 1A (127 aa).

Residues 6 to 102 enclose the SH2 domain; the sequence is VYHGKISRET…GIVIPLQYPV (97 aa). The interaction with FYN SH3 domain stretch occupies residues 67-92; sequence ETAPGVHKRYFRKIKNLISAFQKPDQ. Lys-89 carries the N6-acetyllysine modification. The tract at residues 104-127 is disordered; sequence KSSPRSTQGTTGIREDPDVCLKAP. Basic and acidic residues predominate over residues 116 to 127; sequence IREDPDVCLKAP.

As to quaternary structure, interacts with CD84, CD244, LY9, SLAMF1 and FYN. Interacts with NTRK1, NTRK2 and NTRK3.

Its subcellular location is the cytoplasm. Cytoplasmic adapter regulating receptors of the signaling lymphocytic activation molecule (SLAM) family such as SLAMF1, CD244, LY9, CD84, SLAMF6 and SLAMF7. In SLAM signaling seems to cooperate with SH2D1B/EAT-2. Initially it has been proposed that association with SLAMF1 prevents SLAMF1 binding to inhibitory effectors including INPP5D/SHIP1 and PTPN11/SHP-2. However, by simultaneous interactions, recruits FYN which subsequently phosphorylates and activates SLAMF1. Positively regulates CD244/2B4- and CD84-mediated natural killer (NK) cell functions. Can also promote CD48-, SLAMF6 -, LY9-, and SLAMF7-mediated NK cell activation. In the context of NK cell-mediated cytotoxicity enhances conjugate formation with target cells. May also regulate the activity of the neurotrophin receptors NTRK1, NTRK2 and NTRK3. The protein is SH2 domain-containing protein 1A (SH2D1A) of Saguinus oedipus (Cotton-top tamarin).